Reading from the N-terminus, the 504-residue chain is Anaerobic nitric oxide reductase transcription regulator NorR (504 aa).

4-aspartylphosphate is present on Asp-57. The 230-residue stretch at 187-416 folds into the Sigma-54 factor interaction domain; that stretch reads MIGLSPGMTQ…LEHAIHRAVV (230 aa). Residues 215 to 222 and 278 to 287 contribute to the ATP site; these read GETGTGKE and ADNGTLFLDE. The H-T-H motif DNA-binding region spans 479–498; the sequence is WAACARMLETDVANLHRLAK.

Its pathway is nitrogen metabolism; nitric oxide reduction. In terms of biological role, required for the expression of anaerobic nitric oxide (NO) reductase, acts as a transcriptional activator for at least the norVW operon. Activation also requires sigma-54. This chain is Anaerobic nitric oxide reductase transcription regulator NorR, found in Shigella flexneri serotype 5b (strain 8401).